The primary structure comprises 435 residues: MTILVLGINHKTATVALREKVAFSEEKRLSALNQIEQLKLAQSTVILSTCNRTEVYLHNKFIQPEQNSAWIDECVAWFAAIHQIQLTDLQDCLYFYQNQQAVTHLMRVACGLDSLILGEPQILGQVKQAYQLAEEYYQRAHGLGKSAVISSELSRLFQKTFSTAKRVRTETNIGESAVSVAYAACSLGRQIFESLQELTILLVGAGETIELAARHLLRHGVKKLMIANRTRARAEALVAKLESPFIEILSLSELQDGLNQADIVISSTGSPTTLISYEMMKQAQIQRRYRPVLIVDIAVPRDVEESIVKLDSVYHYTVDDLQNIINHNLSEREKASEQAEEIIAEECAAFFEWLKVRQASNLIRTYRESADEIRQELLEKAQFSLSQGESADKILDEFSTKLMNKLLHSPTLVMQTMVKQGDSRGLQNFLSVIKK.

Substrate-binding positions include 49–52 (TCNR), Ser114, 119–121 (EPQ), and Gln125. Cys50 serves as the catalytic Nucleophile. 204–209 (GAGETI) is a binding site for NADP(+).

Belongs to the glutamyl-tRNA reductase family. As to quaternary structure, homodimer.

The catalysed reaction is (S)-4-amino-5-oxopentanoate + tRNA(Glu) + NADP(+) = L-glutamyl-tRNA(Glu) + NADPH + H(+). The protein operates within porphyrin-containing compound metabolism; protoporphyrin-IX biosynthesis; 5-aminolevulinate from L-glutamyl-tRNA(Glu): step 1/2. Its function is as follows. Catalyzes the NADPH-dependent reduction of glutamyl-tRNA(Glu) to glutamate 1-semialdehyde (GSA). In Actinobacillus succinogenes (strain ATCC 55618 / DSM 22257 / CCUG 43843 / 130Z), this protein is Glutamyl-tRNA reductase.